The following is a 171-amino-acid chain: MNYFNVAKIVNTRGLRGELKVISYTDFPEERFKSGAELQIFKTEKDEVPVQTVTVKNAKEYKGSFIVTLEGMNSINDVEKFKGMILKVEEDQLQDLEEGEFYLHQIIGLDVIENDQKIGTIKEVLSYGPNDVWVVKRPNQNDLLLPYLKDVILNVDLEQGAVQVSVPEGLD.

A PRC barrel domain is found at 98 to 170 (EGEFYLHQII…AVQVSVPEGL (73 aa)).

It belongs to the RimM family. In terms of assembly, binds ribosomal protein uS19.

The protein resides in the cytoplasm. An accessory protein needed during the final step in the assembly of 30S ribosomal subunit, possibly for assembly of the head region. Essential for efficient processing of 16S rRNA. May be needed both before and after RbfA during the maturation of 16S rRNA. It has affinity for free ribosomal 30S subunits but not for 70S ribosomes. The sequence is that of Ribosome maturation factor RimM from Pediococcus pentosaceus (strain ATCC 25745 / CCUG 21536 / LMG 10740 / 183-1w).